A 385-amino-acid chain; its full sequence is Aldehyde dehydrogenase family 3 member B2 (385 aa).

Position 107-112 (107-112) interacts with NAD(+); it reads GSPRVG. Residues Glu-129 and Cys-163 contribute to the active site. At Cys-382 the chain carries Cysteine methyl ester. Cys-382 carries the S-geranylgeranyl cysteine lipid modification. The propeptide at 383–385 is removed in mature form; the sequence is TLL.

This sequence belongs to the aldehyde dehydrogenase family. Post-translationally, geranylgeranylation is important for localization to lipid droplets and enzyme activity. As to expression, salivary gland. Expressed at protein level in placenta.

It localises to the lipid droplet. It carries out the reaction an aldehyde + NAD(+) + H2O = a carboxylate + NADH + 2 H(+). The enzyme catalyses a long-chain fatty aldehyde + NAD(+) + H2O = a long-chain fatty acid + NADH + 2 H(+). The catalysed reaction is a medium-chain fatty aldehyde + NAD(+) + H2O = a medium-chain fatty acid + NADH + 2 H(+). It catalyses the reaction hexadecanoate + NADH + 2 H(+) = hexadecanal + NAD(+) + H2O. It carries out the reaction octanal + NAD(+) + H2O = octanoate + NADH + 2 H(+). It participates in alcohol metabolism; ethanol degradation; acetate from ethanol: step 2/2. Functionally, oxidizes medium and long chain fatty aldehydes in lipid droplets into non-toxic fatty acids. The chain is Aldehyde dehydrogenase family 3 member B2 (ALDH3B2) from Homo sapiens (Human).